The primary structure comprises 201 residues: UPF0301 protein MAP_0045 (201 aa).

The protein belongs to the UPF0301 (AlgH) family.

The polypeptide is UPF0301 protein MAP_0045 (Mycolicibacterium paratuberculosis (strain ATCC BAA-968 / K-10) (Mycobacterium paratuberculosis)).